A 241-amino-acid chain; its full sequence is Small ribosomal subunit protein uS2 (241 aa).

The protein belongs to the universal ribosomal protein uS2 family.

The chain is Small ribosomal subunit protein uS2 from Salmonella agona (strain SL483).